The primary structure comprises 120 residues: UPF0295 protein Aflv_0370 (120 aa).

Transmembrane regions (helical) follow at residues 12–32 (IRTF…GGIF) and 42–62 (LFMI…FWIG).

The protein belongs to the UPF0295 family.

It is found in the cell membrane. The protein is UPF0295 protein Aflv_0370 of Anoxybacillus flavithermus (strain DSM 21510 / WK1).